A 967-amino-acid chain; its full sequence is Probable disease resistance protein At1g61190 (967 aa).

Residues 20–68 (RCLCGKGYIRNLEKNLRALQREMEDLRATQHEVQNKVAREESRHQQRLE) are a coiled coil. The segment at 132–153 (GNFDEVSQPPPRSEVEERPTQP) is disordered. The 304-residue stretch at 138 to 441 (SQPPPRSEVE…CEGFIGEDQV (304 aa)) folds into the NB-ARC domain. 180-187 (GMGGVGKT) is an ATP binding site. LRR repeat units lie at residues 516 to 537 (AVRR…SKCS), 538 to 559 (ELTT…FIRY), 562 to 585 (KLVV…SGLV), 586 to 608 (SLQY…KELK), and 609 to 631 (KLIF…SRLL).

It belongs to the disease resistance NB-LRR family.

In terms of biological role, probable disease resistance protein. The polypeptide is Probable disease resistance protein At1g61190 (Arabidopsis thaliana (Mouse-ear cress)).